Consider the following 416-residue polypeptide: Cysteate synthase (416 aa).

Lysine 104 is modified (N6-(pyridoxal phosphate)lysine). Asparagine 130 lines the pyridoxal 5'-phosphate pocket.

The protein belongs to the threonine synthase family. Cysteate synthase subfamily. Homotrimer. Pyridoxal 5'-phosphate serves as cofactor.

It carries out the reaction O-phospho-L-serine + sulfite + H(+) = L-cysteate + phosphate. Its pathway is cofactor biosynthesis; coenzyme M biosynthesis. Is inhibited by AP3 (DL-2-amino-3-phosphonopropionate) and, to a lesser extent, by L-aspartate or AP4 (DL-2-amino-4-phosphonobutyrate). Is also inhibited by EDTA in vitro. Specifically catalyzes the beta-elimination of phosphate from L-phosphoserine and the beta-addition of sulfite to the dehydroalanine intermediate to produce L-cysteate. Does not display threonine synthase activity like the paralog protein ThrC. The protein is Cysteate synthase of Methanosarcina acetivorans (strain ATCC 35395 / DSM 2834 / JCM 12185 / C2A).